An 829-amino-acid chain; its full sequence is Spindle-defective protein 2 (829 aa).

4 disordered regions span residues 1–29, 41–104, 183–294, and 326–471; these read MNEDAPMDLVDDRFADQSIQDEPVDDGES, EDED…SNDI, KKDV…TTSD, and RKKR…NGHM. Basic and acidic residues predominate over residues 54–82; it reads FRLENRYKPSLHTPRELPTIREENREDVR. Positions 83–93 are enriched in polar residues; it reads SNTSSRVNTRP. The span at 183-216 shows a compositional bias: basic and acidic residues; the sequence is KKDVTRKQENVRPGKMMPEKVNDENEPKSRRFSP. Composition is skewed to polar residues over residues 217 to 230 and 266 to 294; these read ERNTFTTSPMNSTK and PQRTSGTPKTYESRHPTNAYTPNSATTSD. Residues 314–332 are a coiled coil; the sequence is VDINLLTALENARKKRDRP. 2 stretches are compositionally biased toward low complexity: residues 361-370 and 384-408; these read SMTSIVSSST and NSATSTDLTNSNTSNFTNNTSRVST. 2 stretches are compositionally biased toward polar residues: residues 409-439 and 448-463; these read AKNDFSRSSRQRNGFSDSSVSTIIPNMNSMT and SVSSVRTISRASSTMT.

Its subcellular location is the cytoplasm. The protein localises to the cytoskeleton. The protein resides in the microtubule organizing center. It localises to the centrosome. It is found in the centriole. Required both for centrosome duplication and maturation. Required for pericentriolar material (PCM) recruitment. The chain is Spindle-defective protein 2 from Caenorhabditis briggsae.